Reading from the N-terminus, the 126-residue chain is Fluoride-specific ion channel FluC 2 (126 aa).

Transmembrane regions (helical) follow at residues 11 to 31 (IFLIGAGGFLGAVCRFLLCEL), 34 to 54 (GQLGILSVNVIGSFMLGMIMY), 66 to 86 (GKIAFGTGFMGAFTTFSTFAV), and 93 to 113 (FIPALGNISANIFLTLTGVFF). Na(+) is bound by residues Gly76 and Thr79.

It belongs to the fluoride channel Fluc/FEX (TC 1.A.43) family.

The protein resides in the cell membrane. It carries out the reaction fluoride(in) = fluoride(out). Its activity is regulated as follows. Na(+) is not transported, but it plays an essential structural role and its presence is essential for fluoride channel function. Functionally, fluoride-specific ion channel. Important for reducing fluoride concentration in the cell, thus reducing its toxicity. The chain is Fluoride-specific ion channel FluC 2 from Methanosarcina acetivorans (strain ATCC 35395 / DSM 2834 / JCM 12185 / C2A).